The chain runs to 311 residues: Mediator of RNA polymerase II transcription subunit 27 (311 aa).

Ser-132 is subject to Phosphoserine. An N6-methyllysine modification is found at Lys-134.

It belongs to the Mediator complex subunit 27 family. Component of the Mediator complex, which is composed of MED1, MED4, MED6, MED7, MED8, MED9, MED10, MED11, MED12, MED13, MED13L, MED14, MED15, MED16, MED17, MED18, MED19, MED20, MED21, MED22, MED23, MED24, MED25, MED26, MED27, MED29, MED30, MED31, CCNC, CDK8 and CDC2L6/CDK11. The MED12, MED13, CCNC and CDK8 subunits form a distinct module termed the CDK8 module. Mediator containing the CDK8 module is less active than Mediator lacking this module in supporting transcriptional activation. Individual preparations of the Mediator complex lacking one or more distinct subunits have been variously termed ARC, CRSP, DRIP, PC2, SMCC and TRAP.

The protein resides in the nucleus. Its function is as follows. Component of the Mediator complex, a coactivator involved in the regulated transcription of nearly all RNA polymerase II-dependent genes. Mediator functions as a bridge to convey information from gene-specific regulatory proteins to the basal RNA polymerase II transcription machinery. Mediator is recruited to promoters by direct interactions with regulatory proteins and serves as a scaffold for the assembly of a functional preinitiation complex with RNA polymerase II and the general transcription factors. The protein is Mediator of RNA polymerase II transcription subunit 27 (Med27) of Mus musculus (Mouse).